The following is a 686-amino-acid chain: Cation channel sperm-associated protein 1 (686 aa).

A compositionally biased stretch (basic and acidic residues) spans 1–15 (MDQSSRRDESYHETH). Disordered regions lie at residues 1–57 (MDQS…QQPY), 97–177 (TLPN…NRDH), 207–271 (DHHH…KSTA), and 289–318 (QSRE…RAHK). At 1–351 (MDQSSRRDES…QMILSLTQSL (351 aa)) the chain is on the cytoplasmic side. Over residues 25-35 (SHPHPHPHPTL) the composition is skewed to basic residues. The span at 128–142 (DPNHHPHQDDPHRPS) shows a compositional bias: basic and acidic residues. Residues 147 to 160 (HPSSTGSHQGTTHQ) are compositionally biased toward polar residues. Basic residues-rich tracts occupy residues 211–229 (EGHH…KEQR) and 235–244 (HMHHHIHHRS). Residues 245–271 (PSASQLSHKSHSTLATSPSHVGSKSTA) are compositionally biased toward polar residues. Positions 308 to 318 (QKRKKAQRAHK) are enriched in basic residues. Residues 352 to 373 (GFETFIFIVVCLNTVILVAQTF) traverse the membrane as a helical segment. The Extracellular portion of the chain corresponds to 374-382 (TELEIRGEW). The helical transmembrane segment at 383-404 (YFMVLDSIFLSIYVLEAVLKLI) threads the bilayer. Topologically, residues 405–412 (ALGLEYFY) are cytoplasmic. Residues 413-435 (DPWNNLDFFIMVMAVLDFVLLQI) traverse the membrane as a helical segment. At 436-446 (NSLSYSFYNHS) the chain is on the extracellular side. A helical membrane pass occupies residues 447-469 (LFRILKVFKSMRALRAIRVLRRL). Residues 470–487 (SILTSLHEVAGTLSGSLP) are Cytoplasmic-facing. The chain crosses the membrane as a helical span at residues 488-510 (SITAILTLMFTCLFLFSVVLRAL). The Extracellular portion of the chain corresponds to 511–521 (FQDSDPKRFQN). An intramembrane region (helical; Pore-forming) is located at residues 522–534 (IFTTLFTLFTMLT). The Extracellular portion of the chain corresponds to 535-551 (LDDWSLIYIDNRAQGAW). Residues 552–577 (YIIPILMIYIVIQYFIFLNLVIAVLV) traverse the membrane as a helical segment. The Cytoplasmic portion of the chain corresponds to 578 to 686 (DNFQMALLKG…FEAGDDDYGK (109 aa)).

It belongs to the cation channel sperm-associated (TC 1.A.1.19) family. Component of the CatSper complex or CatSpermasome composed of the core pore-forming members CATSPER1, CATSPER2, CATSPER3 and CATSPER4 as well as auxiliary members CATSPERB, CATSPERG2, CATSPERD, CATSPERE, CATSPERZ, C2CD6/CATSPERT, SLCO6C1, TMEM249, TMEM262 and EFCAB9. HSPA1 may be an additional auxiliary complex member. The core complex members CATSPER1, CATSPER2, CATSPER3 and CATSPER4 form a heterotetrameric channel. The auxiliary CATSPERB, CATSPERG2, CATSPERD and CATSPERE subunits form a pavilion-like structure over the pore which stabilizes the complex through interactions with CATSPER4, CATSPER3, CATSPER1 and CATSPER2 respectively. SLCO6C1 interacts with CATSPERE, and TMEM262/CATSPERH interacts with CATSPERB, further stabilizing the complex. C2CD6/CATSPERT interacts at least with CATSPERD and is required for targeting the CatSper complex in the flagellar membrane. Interacts with Ca(v)3.3/CACNA1I, leading to suppression of T-type calcium channel activity. As to expression, testis-specific.

It is found in the cell projection. The protein resides in the cilium. It localises to the flagellum membrane. It carries out the reaction Ca(2+)(in) = Ca(2+)(out). With respect to regulation, activated by intracellular alkalinization. In contrast to the human ortholog, not activated by progesterone. Pore-forming subunit of the CatSper complex, a sperm-specific voltage-gated calcium channel that plays a central role in sperm cell hyperactivation. Controls calcium entry to mediate the hyperactivated motility, a step needed for sperm motility which is essential late in the preparation of sperm for fertilization. This is Cation channel sperm-associated protein 1 (Catsper1) from Mus musculus (Mouse).